The primary structure comprises 429 residues: Glucose-6-phosphate exchanger SLC37A4 (429 aa).

10 consecutive transmembrane segments (helical) span residues 84–104 (LLLVGLVNIFFAWSSTVPVFA), 105–125 (ALWFLNGLAQGLGWPPCGKVL), 139–159 (AILSTSMNLAGGLGPILATIL), 167–187 (STLALSGALCVVVSFLCLLLI), 219–239 (ELLLSPYLWVLSTGYLVVFGV), 260–280 (LVGSSYMSALEVGGLVGSIAA), 302–322 (GLLLFMMAGMTVSMYLFRVTV), 329–349 (LWILVLGAVFGFSSYGPIALF), 368–388 (IVGLMANVGGFLAGLPFSTIA), and 394–414 (STAFWVAEVICAASTAAFFLL).

Belongs to the major facilitator superfamily. Organophosphate:Pi antiporter (OPA) (TC 2.A.1.4) family. As to expression, mostly expressed in liver and kidney.

The protein resides in the endoplasmic reticulum membrane. It catalyses the reaction D-glucose 6-phosphate(in) + phosphate(out) = D-glucose 6-phosphate(out) + phosphate(in). Its activity is regulated as follows. Inhibited by vanadate and chlorogenic acid. Inorganic phosphate and glucose-6-phosphate antiporter of the endoplasmic reticulum. Transports cytoplasmic glucose-6-phosphate into the lumen of the endoplasmic reticulum and translocates inorganic phosphate into the opposite direction. Forms with glucose-6-phosphatase the complex responsible for glucose production through glycogenolysis and gluconeogenesis. Hence, it plays a central role in homeostatic regulation of blood glucose levels. This chain is Glucose-6-phosphate exchanger SLC37A4, found in Homo sapiens (Human).